The sequence spans 92 residues: UPF0335 protein BMEI0289 (92 aa).

This sequence belongs to the UPF0335 family.

The sequence is that of UPF0335 protein BMEI0289 from Brucella melitensis biotype 1 (strain ATCC 23456 / CCUG 17765 / NCTC 10094 / 16M).